Consider the following 596-residue polypeptide: Aspartate--tRNA(Asp/Asn) ligase (596 aa).

Glu172 lines the L-aspartate pocket. The aspartate stretch occupies residues 196–199 (QLFK). Arg218 provides a ligand contact to L-aspartate. Residues 218–220 (RDE) and Gln227 contribute to the ATP site. Residue His455 coordinates L-aspartate. Glu489 is an ATP binding site. An L-aspartate-binding site is contributed by Arg496. Residue 541-544 (GLDR) participates in ATP binding.

This sequence belongs to the class-II aminoacyl-tRNA synthetase family. Type 1 subfamily. Homodimer.

Its subcellular location is the cytoplasm. It catalyses the reaction tRNA(Asx) + L-aspartate + ATP = L-aspartyl-tRNA(Asx) + AMP + diphosphate. In terms of biological role, aspartyl-tRNA synthetase with relaxed tRNA specificity since it is able to aspartylate not only its cognate tRNA(Asp) but also tRNA(Asn). Reaction proceeds in two steps: L-aspartate is first activated by ATP to form Asp-AMP and then transferred to the acceptor end of tRNA(Asp/Asn). This is Aspartate--tRNA(Asp/Asn) ligase from Bordetella bronchiseptica (strain ATCC BAA-588 / NCTC 13252 / RB50) (Alcaligenes bronchisepticus).